The following is a 352-amino-acid chain: Heavy metal-associated isoprenylated plant protein 36 (352 aa).

The 64-residue stretch at 29–92 folds into the HMA domain; the sequence is YTTWVLRVSI…KIMKAGRHAE (64 aa). Positions 40 and 43 each coordinate a metal cation. 3 disordered regions span residues 96–150, 162–211, and 229–252; these read TSME…GNFD, QLQP…GPPE, and PHLH…RHHP. Residues 97–107 show a composition bias toward polar residues; that stretch reads SMENNINNDCN. The segment covering 118–128 has biased composition (acidic residues); the sequence is ETSGDEDDDEN. Residues 133 to 148 show a composition bias toward gly residues; it reads NGGGDVGGGGGGGGGN. A compositionally biased stretch (basic residues) spans 172 to 183; that stretch reads KKKKKKKKKKKS. Residues 192-203 show a composition bias toward gly residues; the sequence is EGGGGGGGGGGP. Cysteine methyl ester is present on Cys-349. Cys-349 carries S-farnesyl cysteine lipidation. A propeptide spans 350–352 (removed in mature form); it reads CVM.

This sequence belongs to the HIPP family.

Functionally, heavy-metal-binding protein. The polypeptide is Heavy metal-associated isoprenylated plant protein 36 (Arabidopsis thaliana (Mouse-ear cress)).